An 857-amino-acid polypeptide reads, in one-letter code: Autoinducer 2 sensor kinase/phosphatase LuxQ (857 aa).

A run of 2 helical transmembrane segments spans residues 14 to 34 and 283 to 303; these read IASF…VSVL and FWMA…RWWL. In terms of domain architecture, Histidine kinase spans 486–706; that stretch reads KMSHELRTPL…RFEIQLPIEL (221 aa). Phosphohistidine; by autocatalysis is present on histidine 489. A Response regulatory domain is found at 731 to 846; that stretch reads RVLLVEDNHT…TLHKALEHFK (116 aa). 4-aspartylphosphate is present on aspartate 780.

In terms of assembly, binds the complex formed by AI-2 and LuxP.

Its subcellular location is the cell inner membrane. It catalyses the reaction ATP + protein L-histidine = ADP + protein N-phospho-L-histidine.. In terms of biological role, at low cell density, in absence of AI-2 (autoinducer 2), LuxQ has a kinase activity and autophosphorylates on a histidine residue. The phosphoryl group is then transferred to an aspartate residue in the response regulator domain. The phosphoryl group is transferred to LuxU, and ultimately to LuxO. At high cell density, in the presence of AI-2, the kinase activity is inactivated, and the response regulator domain has a phosphatase activity. This is Autoinducer 2 sensor kinase/phosphatase LuxQ (luxQ) from Vibrio cholerae serotype O1 (strain ATCC 39315 / El Tor Inaba N16961).